Reading from the N-terminus, the 292-residue chain is Putative gonadotropin-releasing hormone II receptor (292 aa).

The Extracellular portion of the chain corresponds to 1–28; the sequence is MSAGNGTPWDATWNITVQWLAVDIACRT. Cys26 and Cys101 are joined by a disulfide. Residues 29–49 traverse the membrane as a helical segment; that stretch reads LMFLKLMATYSAAFLPVVIGL. The Cytoplasmic segment spans residues 50–67; the sequence is DRQAAVLNPLGSRSGVRK. A helical membrane pass occupies residues 68 to 88; it reads LLGAAWGLSFLLAFPQLFLFH. The Extracellular segment spans residues 89–115; that stretch reads TVHCAGPVPFTQCVTKGSFKAQWQETT. Residues 116–136 form a helical membrane-spanning segment; sequence YNLFTFCCLFLLPLTAMAICY. The Cytoplasmic portion of the chain corresponds to 137 to 177; sequence SRIVLSVSRPQTRKGSHAPAGEFALPRSFDNCPRVRLRALR. The helical transmembrane segment at 178–198 threads the bilayer; sequence LALLILLTFILCWTPYYLLGM. Residues 199-216 lie on the Extracellular side of the membrane; sequence WYWFSPTMLTEVPPSLSH. A helical membrane pass occupies residues 217–237; that stretch reads ILFLLGLLNAPLDPLLYGAFT. The Cytoplasmic portion of the chain corresponds to 238–292; sequence LGCRRGHQELSIDSSKEGSGRMLQEEIHAFRQLEVQKTVTSRRAGETKGISITSI.

The protein belongs to the G-protein coupled receptor 1 family. Post-translationally, phosphorylated on the C-terminal cytoplasmic tail. As to expression, expressed in many tissues.

The protein localises to the cell membrane. Putative receptor for gonadotropin releasing hormone II (GnRH II) which is most probably non-functional. This is Putative gonadotropin-releasing hormone II receptor (GNRHR2) from Homo sapiens (Human).